Here is a 235-residue protein sequence, read N- to C-terminus: Small ribosomal subunit protein eS4 (235 aa).

The S4 RNA-binding domain maps to 37–100; it reads LPLGIIIRDI…NEAYRMLQDE (64 aa).

Belongs to the eukaryotic ribosomal protein eS4 family.

The polypeptide is Small ribosomal subunit protein eS4 (Methanosarcina acetivorans (strain ATCC 35395 / DSM 2834 / JCM 12185 / C2A)).